The chain runs to 386 residues: Phosphoglycerate kinase (386 aa).

Substrate contacts are provided by residues 21 to 23, Arg36, 59 to 62, Arg113, and Arg146; these read DLN and HLGR. ATP-binding positions include Lys197, Glu314, and 340–343; that span reads GGDT.

The protein belongs to the phosphoglycerate kinase family. In terms of assembly, monomer.

The protein localises to the cytoplasm. It catalyses the reaction (2R)-3-phosphoglycerate + ATP = (2R)-3-phospho-glyceroyl phosphate + ADP. Its pathway is carbohydrate degradation; glycolysis; pyruvate from D-glyceraldehyde 3-phosphate: step 2/5. The protein is Phosphoglycerate kinase of Vibrio campbellii (strain ATCC BAA-1116).